The chain runs to 948 residues: Valine--tRNA ligase (948 aa).

A 'HIGH' region motif is present at residues 40–50 (PNVTGSLHMGH). Positions 551-555 (KMSKS) match the 'KMSKS' region motif. Residue Lys-554 participates in ATP binding. Positions 879-947 (LIDKGAELAR…LAEQHARISS (69 aa)) form a coiled coil.

Belongs to the class-I aminoacyl-tRNA synthetase family. ValS type 1 subfamily. Monomer.

It is found in the cytoplasm. The enzyme catalyses tRNA(Val) + L-valine + ATP = L-valyl-tRNA(Val) + AMP + diphosphate. Functionally, catalyzes the attachment of valine to tRNA(Val). As ValRS can inadvertently accommodate and process structurally similar amino acids such as threonine, to avoid such errors, it has a 'posttransfer' editing activity that hydrolyzes mischarged Thr-tRNA(Val) in a tRNA-dependent manner. This is Valine--tRNA ligase from Pseudomonas fluorescens (strain ATCC BAA-477 / NRRL B-23932 / Pf-5).